The chain runs to 154 residues: Prefoldin subunit alpha (154 aa).

The interval 123–154 is disordered; the sequence is EAEQLEQQAQQAQQQMMQQQMQAQQQPQDGEQ. Over residues 127–154 the composition is skewed to low complexity; sequence LEQQAQQAQQQMMQQQMQAQQQPQDGEQ.

This sequence belongs to the prefoldin alpha subunit family. Heterohexamer of two alpha and four beta subunits.

Its subcellular location is the cytoplasm. Functionally, molecular chaperone capable of stabilizing a range of proteins. Seems to fulfill an ATP-independent, HSP70-like function in archaeal de novo protein folding. The chain is Prefoldin subunit alpha from Halobacterium salinarum (strain ATCC 29341 / DSM 671 / R1).